The following is a 498-amino-acid chain: ATP synthase subunit beta, chloroplastic (498 aa).

172–179 (GGAGVGKT) is a binding site for ATP.

This sequence belongs to the ATPase alpha/beta chains family. In terms of assembly, F-type ATPases have 2 components, CF(1) - the catalytic core - and CF(0) - the membrane proton channel. CF(1) has five subunits: alpha(3), beta(3), gamma(1), delta(1), epsilon(1). CF(0) has four main subunits: a(1), b(1), b'(1) and c(9-12).

It is found in the plastid. The protein localises to the chloroplast thylakoid membrane. The enzyme catalyses ATP + H2O + 4 H(+)(in) = ADP + phosphate + 5 H(+)(out). Functionally, produces ATP from ADP in the presence of a proton gradient across the membrane. The catalytic sites are hosted primarily by the beta subunits. The polypeptide is ATP synthase subunit beta, chloroplastic (Morus indica (Mulberry)).